Here is a 1710-residue protein sequence, read N- to C-terminus: Chromodomain-helicase-DNA-binding protein 1 (1710 aa).

The segment covering 1-10 (MNGHSDEESV) has biased composition (basic and acidic residues). The tract at residues 1–252 (MNGHSDEESV…KEDEEMKTDS (252 aa)) is disordered. Residues 35-63 (SSGSSSDGSSSQSGSSDSDSGSESGSQSE) show a composition bias toward low complexity. Residues 67-85 (DTSRENKVQAKPPKVDGAE) show a composition bias toward basic and acidic residues. Residues 105-121 (QQQQQQQQQHQASSNSG) show a composition bias toward low complexity. Residues 122–136 (SEEDSSSSEDSDDSS) are compositionally biased toward acidic residues. A compositionally biased stretch (low complexity) spans 152 to 163 (SGSGSPSQSGSD). Residues 187-210 (KVKSRKPQNRSKSKNGKKILGQKK) show a composition bias toward basic residues. Phosphoserine is present on residues S215 and S216. Over residues 215-226 (SSEEDDDEEDYD) the composition is skewed to acidic residues. The residue at position 237 (T237) is a Phosphothreonine. A Phosphoserine modification is found at S241. Position 250 is a phosphothreonine (T250). S252 is subject to Phosphoserine. Chromo domains follow at residues 272 to 364 (ETIE…RWLK) and 389 to 452 (QIVE…TPFK). S471 is modified (phosphoserine). One can recognise a Helicase ATP-binding domain in the interval 493–663 (AHSWCKGNSC…WSLLHFIMPE (171 aa)). 506-513 (DEMGLGKT) contacts ATP. Residues 614-617 (DEAH) carry the DEAH box motif. A Helicase C-terminal domain is found at 792 to 943 (LLDKLLIRLR…HLVIQRMDTT (152 aa)). A phosphoserine mark is found at S1025, S1040, S1081, S1085, S1096, S1098, S1100, and S1102. A disordered region spans residues 1080–1120 (ISFNGSEGRRSRSRRYSGSDSDSISEGKRPKKRGRPRTIPR). Basic residues predominate over residues 1108–1117 (RPKKRGRPRT). Residue S1161 is modified to Phosphoserine. 2 disordered regions span residues 1321 to 1408 (EALS…ESEE) and 1502 to 1710 (KKRQ…SRKT). Residues 1329 to 1345 (SKRRKARAKKNKAMKSI) are compositionally biased toward basic residues. 7 positions are modified to phosphoserine: S1353, S1355, S1356, S1360, S1363, S1371, and S1373. Residues 1370–1379 (LSESKSDGRE) are compositionally biased toward basic and acidic residues. Residues 1409-1511 (LDQKTFSICK…KKRQESQQNS (103 aa)) are CHD1 helical C-terminal domain (CHCT). Low complexity predominate over residues 1507-1516 (SQQNSDQNSN). Composition is skewed to basic and acidic residues over residues 1523 to 1573 (RNPD…DSRK) and 1582 to 1670 (GKDH…DHRA). At S1622 the chain carries Phosphoserine. Tandem repeats lie at residues 1628–1632 (HSDHR), 1634–1638 (HSDHR), and 1640–1644 (HSDHR). Positions 1628–1644 (HSDHRSHSDHRLHSDHR) are 3 X 5 AA repeats of H-S-D-H-R. A phosphoserine mark is found at S1677, R1688, and S1689. Basic and acidic residues predominate over residues 1690–1701 (PFEHSVEHKSTP).

This sequence belongs to the SNF2/RAD54 helicase family. In terms of assembly, component of the SAGA complex. Interacts with BCLAF1, NCoR, SRP20 and SAFB. Specifically interacts with methylated H3K4me2 and H3K4me3. Interacts with the FACT complex, the PAF complex and the U2 snRNP. Interacts directly with PAF1, SFA3A1, SFA3A2, SFA3A3, SNF2 and SSRP1. In terms of tissue distribution, expressed in many tissues including in the brain, where the highest level of expression is found in the cerebellum and basal ganglia.

It is found in the nucleus. The protein localises to the cytoplasm. It catalyses the reaction ATP + H2O = ADP + phosphate + H(+). Functionally, ATP-dependent chromatin-remodeling factor which functions as substrate recognition component of the transcription regulatory histone acetylation (HAT) complex SAGA. Regulates polymerase II transcription. Also required for efficient transcription by RNA polymerase I, and more specifically the polymerase I transcription termination step. Regulates negatively DNA replication. Not only involved in transcription-related chromatin-remodeling, but also required to maintain a specific chromatin configuration across the genome. Is also associated with histone deacetylase (HDAC) activity. Required for the bridging of SNF2, the FACT complex, the PAF complex as well as the U2 snRNP complex to H3K4me3. Functions to modulate the efficiency of pre-mRNA splicing in part through physical bridging of spliceosomal components to H3K4me3. Required for maintaining open chromatin and pluripotency in embryonic stem cells. This is Chromodomain-helicase-DNA-binding protein 1 from Homo sapiens (Human).